Here is a 29-residue protein sequence, read N- to C-terminus: Galanin (29 aa).

Alanine 29 carries the alanine amide modification.

Belongs to the galanin family.

The protein resides in the secreted. Its function is as follows. Contracts smooth muscle of the gastrointestinal and genitourinary tract, regulates growth hormone release, modulates insulin release, and may be involved in the control of adrenal secretion. In Ovis aries (Sheep), this protein is Galanin (GAL).